The sequence spans 205 residues: Ribosomal RNA large subunit methyltransferase E (205 aa).

Positions 50, 52, 67, 83, and 111 each coordinate S-adenosyl-L-methionine. Catalysis depends on Lys-151, which acts as the Proton acceptor.

The protein belongs to the class I-like SAM-binding methyltransferase superfamily. RNA methyltransferase RlmE family.

Its subcellular location is the cytoplasm. It carries out the reaction uridine(2552) in 23S rRNA + S-adenosyl-L-methionine = 2'-O-methyluridine(2552) in 23S rRNA + S-adenosyl-L-homocysteine + H(+). Functionally, specifically methylates the uridine in position 2552 of 23S rRNA at the 2'-O position of the ribose in the fully assembled 50S ribosomal subunit. The chain is Ribosomal RNA large subunit methyltransferase E from Thermoplasma acidophilum (strain ATCC 25905 / DSM 1728 / JCM 9062 / NBRC 15155 / AMRC-C165).